A 769-amino-acid chain; its full sequence is Homoaconitase, mitochondrial (769 aa).

The transit peptide at 1 to 28 (MQSRLLPSGPGRRWISLRVPNTPQRRAF) directs the protein to the mitochondrion. Residues Cys391, Cys460, and Cys463 each coordinate [4Fe-4S] cluster.

This sequence belongs to the aconitase/IPM isomerase family. [4Fe-4S] cluster is required as a cofactor.

Its subcellular location is the mitochondrion. The enzyme catalyses (2R,3S)-homoisocitrate = cis-homoaconitate + H2O. The protein operates within amino-acid biosynthesis; L-lysine biosynthesis via AAA pathway; L-alpha-aminoadipate from 2-oxoglutarate: step 3/5. Functionally, catalyzes the reversible hydration of cis-homoaconitate to (2R,3S)-homoisocitrate, a step in the alpha-aminoadipate pathway for lysine biosynthesis. The polypeptide is Homoaconitase, mitochondrial (lysA) (Aspergillus niger (strain ATCC MYA-4892 / CBS 513.88 / FGSC A1513)).